The primary structure comprises 429 residues: Adenylosuccinate synthetase (429 aa).

GTP is bound by residues 12–18 (GDEGKGK) and 40–42 (GHT). Aspartate 13 serves as the catalytic Proton acceptor. The Mg(2+) site is built by aspartate 13 and glycine 40. IMP contacts are provided by residues 13–16 (DEGK), 38–41 (NAGH), threonine 129, arginine 143, glutamine 223, threonine 238, and arginine 302. Residue histidine 41 is the Proton donor of the active site. 298 to 304 (TVTGRRR) is a binding site for substrate. GTP contacts are provided by residues arginine 304, 330 to 332 (KLD), and 412 to 414 (STS).

Belongs to the adenylosuccinate synthetase family. As to quaternary structure, homodimer. It depends on Mg(2+) as a cofactor.

The protein resides in the cytoplasm. The catalysed reaction is IMP + L-aspartate + GTP = N(6)-(1,2-dicarboxyethyl)-AMP + GDP + phosphate + 2 H(+). The protein operates within purine metabolism; AMP biosynthesis via de novo pathway; AMP from IMP: step 1/2. Its function is as follows. Plays an important role in the de novo pathway of purine nucleotide biosynthesis. Catalyzes the first committed step in the biosynthesis of AMP from IMP. The polypeptide is Adenylosuccinate synthetase (Granulibacter bethesdensis (strain ATCC BAA-1260 / CGDNIH1)).